A 349-amino-acid chain; its full sequence is Protein AMBP (349 aa).

The signal sequence occupies residues 1–19 (MQGLGALFLLLTACLTLKA). 3-hydroxy-L-kynurenine-binding residues include Cys-52 and Lys-110. Cys-90 and Cys-187 are disulfide-bonded. N-linked (GlcNAc...) asparagine glycosylation occurs at Asn-114. 3-hydroxy-L-kynurenine is bound by residues Lys-136 and Lys-148. Ser-214 is a glycosylation site (O-linked (Xyl...) (chondroitin sulfate) serine). Cystine bridges form between Cys-230–Cys-280, Cys-239–Cys-263, Cys-255–Cys-276, Cys-286–Cys-336, Cys-295–Cys-319, and Cys-311–Cys-332. BPTI/Kunitz inhibitor domains lie at 230–280 (CQLN…LQTC) and 286–336 (CNLP…KEYC). N-linked (GlcNAc...) asparagine glycosylation is present at Asn-233.

In the N-terminal section; belongs to the calycin superfamily. Lipocalin family. Monomer. Homodimer. In plasma, it occurs as a monomer or dimer and in covalently-linked complexes with immunoglobulin A (IgA), ALB/albumin and F2/prothrombin. Chromophore-bound alpha-1-microglobulin interacts with the constant region of immunoglobulin A. Chromophore-bound alpha-1-microglobulin interacts with ALB with molar ratio 2:1 and 1:1; this interaction does not prevent fatty acid binding to ALB. Interacts with F2/prothrombin (via N-terminus) with molar ratio 2:1 and 1:1; this interaction does not prevent the activation of prothrombin to thrombin. Interacts with NDUFAB1, a subunit of mitochondrial complex I. Interacts with FN1. In terms of assembly, I-alpha-I plasma protease inhibitors are assembled from one or two heavy chains (HC) and one light chain, bikunin. Inter-alpha-inhibitor (I-alpha-I) is composed of ITIH1/HC1, ITIH2/HC2 and bikunin, and pre-alpha-inhibitor (P-alpha-I) of ITIH3/HC3 and bikunin. Interacts with TNFAIP6 (via Link domain). As to quaternary structure, monomer. Also occurs as a complex with tryptase in mast cells. In terms of processing, the precursor is proteolytically processed into separately functioning proteins. 3-hydroxykynurenine, an oxidized tryptophan metabolite that is common in biological fluids, reacts with Cys-53, Lys-111, Lys-137, and Lys-149 to form heterogeneous polycyclic chromophores including hydroxanthommatin. The reaction by alpha-1-microglobulin is autocatalytic; the human protein forms chromophore even when expressed in insect and bacterial cells. The chromophore can react with accessible cysteines forming non-reducible thioether cross-links with other molecules of alpha-1-microglobulin or with other proteins such as Ig alpha-1 chain C region 'Cys-352'. Post-translationally, heavy chains are interlinked with bikunin via a chondroitin 4-sulfate bridge to the C-terminal aspartate. In terms of processing, proteolytically cleaved by PRSS3 at Kunitz domain 2. Expressed by the liver and secreted in plasma.

It localises to the secreted. It is found in the endoplasmic reticulum. Its subcellular location is the cytoplasm. The protein resides in the cytosol. The protein localises to the cell membrane. It localises to the nucleus membrane. It is found in the mitochondrion inner membrane. Its subcellular location is the extracellular space. The protein resides in the extracellular matrix. Functionally, antioxidant and tissue repair protein with reductase, heme-binding and radical-scavenging activities. Removes and protects against harmful oxidants and repairs macromolecules in intravascular and extravascular spaces and in intracellular compartments. Intravascularly, plays a regulatory role in red cell homeostasis by preventing heme- and reactive oxygen species-induced cell damage. Binds and degrades free heme to protect fetal and adult red blood cells from hemolysis. Reduces extracellular methemoglobin, a Fe3+ (ferric) form of hemoglobin that cannot bind oxygen, back to the Fe2+ (ferrous) form deoxyhemoglobin, which has oxygen-carrying potential. Upon acute inflammation, inhibits oxidation of low-density lipoprotein particles by MPO and limits vascular damage. Extravascularly, protects from oxidation products formed on extracellular matrix structures and cell membranes. Catalyzes the reduction of carbonyl groups on oxidized collagen fibers and preserves cellular and extracellular matrix ultrastructures. Importantly, counteracts the oxidative damage at blood-placenta interface, preventing leakage of free fetal hemoglobin into the maternal circulation. Intracellularly, has a role in maintaining mitochondrial redox homeostasis. Bound to complex I of the respiratory chain of mitochondria, may scavenge free radicals and preserve mitochondrial ATP synthesis. Protects renal tubule epithelial cells from heme-induced oxidative damage to mitochondria. Reduces cytochrome c from Fe3+ (ferric) to the Fe2+ (ferrous) state through formation of superoxide anion radicals in the presence of ascorbate or NADH/NADPH electron donor cofactors, ascorbate being the preferred cofactor. Has a chaperone role in facilitating the correct folding of bikunin in the endoplasmic reticulum compartment. Kunitz-type serine protease inhibitor and structural component of extracellular matrix with a role in extracellular space remodeling and cell adhesion. Among others, has antiprotease activity toward kallikrein, a protease involved in airway inflammation; inhibits GZMK/granzyme, a granule-stored serine protease involved in NK and T cell cytotoxic responses; and inhibits PLG/plasmin, a protease required for activation of matrix metalloproteinases. As part of I-alpha-I complex, provides for the heavy chains to be transferred from I-alpha-I complex to hyaluronan in the presence of TNFAIP6, in a dynamic process that releases free bikunin and remodels extracellular matrix proteoglycan structures. Free bikunin, but not its heavy chain-bound form, acts as a potent protease inhibitor in airway secretions. Part of hyaluronan-rich extracellular matrix that surrounds oocyte during cumulus oophorus expansion, an indispensable process for proper ovulation. Also inhibits calcium oxalate crystallization. In terms of biological role, kunitz-type serine protease inhibitor. Has high catalytic efficiency for F10/blood coagulation factor Xa and may act as an anticoagulant by inhibiting prothrombin activation. Inhibits trypsin and mast cell CMA1/chymase and tryptase proteases. This Rattus norvegicus (Rat) protein is Protein AMBP (Ambp).